The following is a 62-amino-acid chain: Large ribosomal subunit protein bL28 (62 aa).

The protein belongs to the bacterial ribosomal protein bL28 family.

The sequence is that of Large ribosomal subunit protein bL28 from Carboxydothermus hydrogenoformans (strain ATCC BAA-161 / DSM 6008 / Z-2901).